The sequence spans 867 residues: Cadherin-related family member 1 (867 aa).

Residues 1-21 (MGRGPPAVLAPWMLFLSLAQA) form the signal peptide. Over 22-701 (NFAPHFFDNG…LMQTKDNPMK (680 aa)) the chain is Extracellular. Cadherin domains lie at 36–135 (NGNM…APRF), 136–247 (IQEP…GPVF), 248–354 (VGTP…PPTF), 360–473 (PQNR…VPKF), 474–577 (TSHY…YPQF), and 574–689 (YPQF…SPMA). N-linked (GlcNAc...) asparagine glycans are attached at residues Asn-58 and Asn-89. N-linked (GlcNAc...) asparagine glycans are attached at residues Asn-288 and Asn-297. A helical transmembrane segment spans residues 702 to 722 (AVGVLAGIMAIIVAITVLIST). At 723–867 (ATFWRNKKSN…KKNLHSKAYF (145 aa)) the chain is on the cytoplasmic side. A disordered region spans residues 767-843 (KFVLREAPPN…VAKRKAVGSP (77 aa)). The segment covering 777–786 (ENCNNNSRGS) has biased composition (polar residues). Residues 790–802 (PQAPAPPPPPSPA) are compositionally biased toward pro residues.

In terms of assembly, interacts with PROM1. In terms of processing, undergoes proteolytic cleavage; produces a soluble 95 kDa N-terminal fragment and a 25 kDa cell-associated C-terminal fragment. In terms of tissue distribution, expressed in photoreceptor cells of the outer nuclear layer of the retina.

The protein resides in the cell membrane. In terms of biological role, potential calcium-dependent cell-adhesion protein. May be required for the structural integrity of the outer segment (OS) of photoreceptor cells. The polypeptide is Cadherin-related family member 1 (CDHR1) (Bos taurus (Bovine)).